Here is a 423-residue protein sequence, read N- to C-terminus: Glutamate-1-semialdehyde 2,1-aminomutase (423 aa).

K259 is modified (N6-(pyridoxal phosphate)lysine).

The protein belongs to the class-III pyridoxal-phosphate-dependent aminotransferase family. HemL subfamily. Homodimer. Pyridoxal 5'-phosphate serves as cofactor.

Its subcellular location is the cytoplasm. The catalysed reaction is (S)-4-amino-5-oxopentanoate = 5-aminolevulinate. It functions in the pathway porphyrin-containing compound metabolism; protoporphyrin-IX biosynthesis; 5-aminolevulinate from L-glutamyl-tRNA(Glu): step 2/2. This is Glutamate-1-semialdehyde 2,1-aminomutase from Thermosipho africanus (strain TCF52B).